Here is a 670-residue protein sequence, read N- to C-terminus: Methionine--tRNA ligase (670 aa).

The short motif at 14–24 (PYANGHLHLGH) is the 'HIGH' region element. Positions 145, 148, 158, and 161 each coordinate Zn(2+). Residues 330–334 (KMSKS) carry the 'KMSKS' region motif. An ATP-binding site is contributed by lysine 333. The 101-residue stretch at 570 to 670 (DFAKVDLRIA…AGALPGMKVK (101 aa)) folds into the tRNA-binding domain.

The protein belongs to the class-I aminoacyl-tRNA synthetase family. MetG type 1 subfamily. In terms of assembly, homodimer. Zn(2+) serves as cofactor.

It localises to the cytoplasm. The enzyme catalyses tRNA(Met) + L-methionine + ATP = L-methionyl-tRNA(Met) + AMP + diphosphate. Functionally, is required not only for elongation of protein synthesis but also for the initiation of all mRNA translation through initiator tRNA(fMet) aminoacylation. The sequence is that of Methionine--tRNA ligase from Legionella pneumophila (strain Paris).